Here is a 240-residue protein sequence, read N- to C-terminus: Adiponectin (240 aa).

Residues 1–17 (MLLQGALLLLLALPSHG) form the signal peptide. 5-hydroxylysine is present on lysine 28. O-linked (Gal...) hydroxylysine glycosylation occurs at lysine 28. The disordered stretch occupies residues 29-100 (GACAGWMAGI…GTPGRKGEPG (72 aa)). Residue cysteine 31 is modified to S-(2-succinyl)cysteine. 4-hydroxyproline occurs at positions 39, 42, and 48. The Collagen-like domain maps to 43 to 102 (GHNGTPGRDGRDGTPGEKGEKGDPGLVGPKGDTGETGITGIEGPRGFPGTPGRKGEPGES). A compositionally biased stretch (basic and acidic residues) spans 50-65 (RDGRDGTPGEKGEKGD). 3 positions are modified to 5-hydroxylysine: lysine 60, lysine 63, and lysine 72. O-linked (Gal...) hydroxylysine glycans are attached at residues lysine 60, lysine 63, and lysine 72. The residue at position 86 (proline 86) is a 4-hydroxyproline. Position 96 is a 5-hydroxylysine (lysine 96). An O-linked (Gal...) hydroxylysine glycan is attached at lysine 96. The C1q domain occupies 103-240 (AYVYRSAFSV…GFLLYHNIVE (138 aa)).

Homomultimer. Forms trimers, hexamers and 12- to 18-mers. The trimers (low molecular weight complexes / LMW) are assembled via non-covalent interactions of the collagen-like domains in a triple helix and hydrophobic interactions within the globular C1q domain. Several trimers can associate to form disulfide-linked hexamers (middle molecular weight complexes / MMW) and larger complexes (higher molecular weight / HMW). The HMW-complex assembly is also modulated by the degree of lysine hydroxylation and glycosylation. LMW, MMW and HMW complexes bind to HBEGF, MMW and HMW complexes bind to PDGFB, and HMW complex binds to FGF2. Interacts with CTRP9 via the C1q domain (heterotrimeric complex). HMW complexes are more extensively glycosylated than smaller oligomers. Hydroxylation and glycosylation of the lysine residues within the collagen-like domain of adiponectin seem to be critically involved in regulating the formation and/or secretion of HMW complexes and consequently contribute to the insulin-sensitizing activity of adiponectin in hepatocytes. In terms of processing, O-glycosylated. O-linked glycans on hydroxylysine residues consist of Glc-Gal disaccharides bound to the oxygen atom of post-translationally added hydroxyl groups. O-linked glycosylations elsewhere disialylated with the structure Neu5Acalpha2-&gt;8Neu5Acalpha2-&gt;3Gal. Sialylated by alpha 2,8-sialyltransferase III. Desialylated forms are rapidly cleared from the circulation. Not N-glycosylated. Post-translationally, succination of Cys-31 by the Krebs cycle intermediate fumarate, which leads to S-(2-succinyl)cysteine residues, inhibits polymerization and secretion of adiponectin. Adiponectin is a major target for succination in both adipocytes and adipose tissue of diabetic mammals. It was proposed that succination of proteins is a biomarker of mitochondrial stress and accumulation of Krebs cycle intermediates in adipose tissue in diabetes and that succination of adiponectin may contribute to the decrease in plasma adiponectin in diabetes.

The protein resides in the secreted. Polymerization and secretion of adiponectin is inhibited by succination of cysteine residues by the Krebs cycle intermediate fumarate, which leads to S-(2-succinyl)cysteine residues. Important adipokine involved in the control of fat metabolism and insulin sensitivity, with direct anti-diabetic, anti-atherogenic and anti-inflammatory activities. Stimulates AMPK phosphorylation and activation in the liver and the skeletal muscle, enhancing glucose utilization and fatty-acid combustion. Antagonizes TNF-alpha by negatively regulating its expression in various tissues such as liver and macrophages, and also by counteracting its effects. Inhibits endothelial NF-kappa-B signaling through a cAMP-dependent pathway. May play a role in cell growth, angiogenesis and tissue remodeling by binding and sequestering various growth factors with distinct binding affinities, depending on the type of complex, LMW, MMW or HMW. In Bos taurus (Bovine), this protein is Adiponectin (ADIPOQ).